We begin with the raw amino-acid sequence, 492 residues long: Glutamyl-tRNA(Gln) amidotransferase subunit A (492 aa).

Catalysis depends on charge relay system residues Lys-79 and Ser-154. The active-site Acyl-ester intermediate is Ser-178.

The protein belongs to the amidase family. GatA subfamily. As to quaternary structure, heterotrimer of A, B and C subunits.

The enzyme catalyses L-glutamyl-tRNA(Gln) + L-glutamine + ATP + H2O = L-glutaminyl-tRNA(Gln) + L-glutamate + ADP + phosphate + H(+). Its function is as follows. Allows the formation of correctly charged Gln-tRNA(Gln) through the transamidation of misacylated Glu-tRNA(Gln) in organisms which lack glutaminyl-tRNA synthetase. The reaction takes place in the presence of glutamine and ATP through an activated gamma-phospho-Glu-tRNA(Gln). The sequence is that of Glutamyl-tRNA(Gln) amidotransferase subunit A from Desulforudis audaxviator (strain MP104C).